The following is a 68-amino-acid chain: Large ribosomal subunit protein uL29 (68 aa).

The protein belongs to the universal ribosomal protein uL29 family.

The sequence is that of Large ribosomal subunit protein uL29 from Limosilactobacillus fermentum (strain NBRC 3956 / LMG 18251) (Lactobacillus fermentum).